The following is a 328-amino-acid chain: Carbonic anhydrase-related protein 10 (328 aa).

The Alpha-carbonic anhydrase domain maps to 31 to 301; that stretch reads GWWAYKEVVQ…LNNRCIRTNI (271 aa).

It belongs to the alpha-carbonic anhydrase family.

Its function is as follows. Does not have a catalytic activity. This chain is Carbonic anhydrase-related protein 10 (CA10), found in Bos taurus (Bovine).